The following is a 579-amino-acid chain: Zinc finger-containing ubiquitin peptidase 1 (579 aa).

The segment at 2–25 adopts a C2H2-type 1 zinc-finger fold; that stretch reads LSCDICGETVSSEPDMKAHLLIVH. A C2H2-type 2; atypical zinc finger spans residues 30-53; it reads VICPFCKLSGVNYDEMCFHIETAH. C2H2-type zinc fingers lie at residues 155 to 178 and 194 to 216; these read PECP…KTKH and YDCP…VDLH. The tract at residues 227–249 is MIU; the sequence is NRVQCSRDLELAQQLQQEEDRKR. The tract at residues 250–275 is zUBD/ZHA; the sequence is RSEESRQEMEEFQKLQRQYGLDNSGG. Lysine 263 is subject to N6-acetyllysine. Cysteine 361 (nucleophile) is an active-site residue. Histidine 492 acts as the Proton acceptor in catalysis. Aspartate 513 is a catalytic residue.

This sequence belongs to the peptidase C78 family. ZUFSP subfamily. In terms of assembly, interacts with RPA1 and RPA2.

It localises to the cytoplasm. The protein resides in the nucleus. The enzyme catalyses Thiol-dependent hydrolysis of ester, thioester, amide, peptide and isopeptide bonds formed by the C-terminal Gly of ubiquitin (a 76-residue protein attached to proteins as an intracellular targeting signal).. Functionally, deubiquitinase with endodeubiquitinase activity that specifically interacts with and cleaves 'Lys-63'-linked long polyubiquitin chains. Shows only weak activity against 'Lys-11' and 'Lys-48'-linked chains. Plays an important role in genome stability pathways, functioning to prevent spontaneous DNA damage and also promote cellular survival in response to exogenous DNA damage. Modulates the ubiquitination status of replication protein A (RPA) complex proteins in response to replication stress. The sequence is that of Zinc finger-containing ubiquitin peptidase 1 from Bos taurus (Bovine).